The chain runs to 97 residues: DNA-directed RNA polymerase subunit omega (97 aa).

Belongs to the RNA polymerase subunit omega family. In terms of assembly, the RNAP catalytic core consists of 2 alpha, 1 beta, 1 beta' and 1 omega subunit. When a sigma factor is associated with the core the holoenzyme is formed, which can initiate transcription.

It catalyses the reaction RNA(n) + a ribonucleoside 5'-triphosphate = RNA(n+1) + diphosphate. In terms of biological role, promotes RNA polymerase assembly. Latches the N- and C-terminal regions of the beta' subunit thereby facilitating its interaction with the beta and alpha subunits. In Corynebacterium glutamicum (strain ATCC 13032 / DSM 20300 / JCM 1318 / BCRC 11384 / CCUG 27702 / LMG 3730 / NBRC 12168 / NCIMB 10025 / NRRL B-2784 / 534), this protein is DNA-directed RNA polymerase subunit omega.